We begin with the raw amino-acid sequence, 332 residues long: UDP-N-acetylenolpyruvoylglucosamine reductase (332 aa).

Residues Val-55–Gly-221 form the FAD-binding PCMH-type domain. Arg-200 is an active-site residue. The Proton donor role is filled by Ser-251. Residue Glu-321 is part of the active site.

It belongs to the MurB family. Requires FAD as cofactor.

The protein resides in the cytoplasm. The enzyme catalyses UDP-N-acetyl-alpha-D-muramate + NADP(+) = UDP-N-acetyl-3-O-(1-carboxyvinyl)-alpha-D-glucosamine + NADPH + H(+). The protein operates within cell wall biogenesis; peptidoglycan biosynthesis. Its function is as follows. Cell wall formation. This is UDP-N-acetylenolpyruvoylglucosamine reductase from Nostoc punctiforme (strain ATCC 29133 / PCC 73102).